A 165-amino-acid polypeptide reads, in one-letter code: U11/U12 small nuclear ribonucleoprotein 25 kDa protein (165 aa).

Residues 52–137 (MRLSVVKLDG…IRNNSQVTFM (86 aa)) enclose the Ubiquitin-like domain. A disordered region spans residues 145 to 165 (RGRHSKRKKHRLFRSLHKTSS).

As to quaternary structure, component of the U11/U12 snRNPs that are part of the U12-type spliceosome.

The protein localises to the nucleus. This is U11/U12 small nuclear ribonucleoprotein 25 kDa protein (SNRNP25) from Arabidopsis thaliana (Mouse-ear cress).